Reading from the N-terminus, the 174-residue chain is RNA pyrophosphohydrolase (174 aa).

The 154-residue stretch at 14–167 (PYRPCVGLMV…KRKVYEEVVA (154 aa)) folds into the Nudix hydrolase domain. The Nudix box motif lies at 55-76 (GGIDKGEEPLEAAIRELYEETG).

It belongs to the Nudix hydrolase family. RppH subfamily. A divalent metal cation is required as a cofactor.

Its function is as follows. Accelerates the degradation of transcripts by removing pyrophosphate from the 5'-end of triphosphorylated RNA, leading to a more labile monophosphorylated state that can stimulate subsequent ribonuclease cleavage. This is RNA pyrophosphohydrolase from Brucella anthropi (strain ATCC 49188 / DSM 6882 / CCUG 24695 / JCM 21032 / LMG 3331 / NBRC 15819 / NCTC 12168 / Alc 37) (Ochrobactrum anthropi).